The following is a 136-amino-acid chain: Small ribosomal subunit protein uS19 (136 aa).

It belongs to the universal ribosomal protein uS19 family.

Its function is as follows. Protein S19 forms a complex with S13 that binds strongly to the 16S ribosomal RNA. In Methanothrix thermoacetophila (strain DSM 6194 / JCM 14653 / NBRC 101360 / PT) (Methanosaeta thermophila), this protein is Small ribosomal subunit protein uS19.